A 187-amino-acid polypeptide reads, in one-letter code: UPF0200 protein APE_1753.1 (187 aa).

13-20 (GLPGSGKS) contributes to the ATP binding site.

Belongs to the UPF0200 family.

This is UPF0200 protein APE_1753.1 from Aeropyrum pernix (strain ATCC 700893 / DSM 11879 / JCM 9820 / NBRC 100138 / K1).